The chain runs to 495 residues: Chromosomal replication initiator protein DnaA (495 aa).

The interval 1-91 is domain I, interacts with DnaA modulators; that stretch reads MTADPDPPFV…ITALSRHLGQ (91 aa). Residues 91 to 154 form a domain II region; the sequence is QRVELGVRIA…TPAAEDPNAV (64 aa). The domain III, AAA+ region stretch occupies residues 155–371; that stretch reads SLNRRYTFDT…GALIRVTAFA (217 aa). ATP-binding residues include G199, G201, K202, and T203. Positions 372–495 are domain IV, binds dsDNA; sequence SLNKTPIDKS…TTRIRQRAKR (124 aa).

It belongs to the DnaA family. Oligomerizes as a right-handed, spiral filament on DNA at oriC.

Its subcellular location is the cytoplasm. In terms of biological role, plays an essential role in the initiation and regulation of chromosomal replication. ATP-DnaA binds to the origin of replication (oriC) to initiate formation of the DNA replication initiation complex once per cell cycle. Binds the DnaA box (a 9 base pair repeat at the origin) and separates the double-stranded (ds)DNA. Forms a right-handed helical filament on oriC DNA; dsDNA binds to the exterior of the filament while single-stranded (ss)DNA is stabiized in the filament's interior. The ATP-DnaA-oriC complex binds and stabilizes one strand of the AT-rich DNA unwinding element (DUE), permitting loading of DNA polymerase. After initiation quickly degrades to an ADP-DnaA complex that is not apt for DNA replication. Binds acidic phospholipids. The protein is Chromosomal replication initiator protein DnaA of Mycobacterium sp. (strain JLS).